Reading from the N-terminus, the 329-residue chain is MQFIDQAIIDVKAGSGGDGISAFRREKYVPAGGPAGGDGGQGGNVVLEADDNLQTLLDFKFQKLISAENGQRGGPNKCTGASGKDTVLKVPCGTEVRHLSTNIILGDLTNKGQQLIVAFGGKGGFGNARYLSNSNRAPEKFTEGKVGEEWSLQLELKLLAEVGIIGLPNAGKSTLISVLSSARPKIADYPFTTLIPNLGVVRRPSGDGTVFADIPGLISGASKGIGLGHDFLRHIERTKVLLHLIDSASTDPINDFKTINEELTSYGHGLISRPRIFVLNKKELLNENEIKKLLNKIEKMTMKKVHIISAVTKFGLDDLLSSIWNELGY.

The 159-residue stretch at 1–159 (MQFIDQAIID…WSLQLELKLL (159 aa)) folds into the Obg domain. Positions 160–328 (AEVGIIGLPN…LLSSIWNELG (169 aa)) constitute an OBG-type G domain. ATP contacts are provided by residues 166 to 173 (GLPNAGKS), 191 to 195 (FTTLI), 213 to 216 (DIPG), 280 to 283 (NKKE), and 309 to 311 (SAV). The Mg(2+) site is built by Ser-173 and Thr-193.

This sequence belongs to the TRAFAC class OBG-HflX-like GTPase superfamily. OBG GTPase family. As to quaternary structure, monomer. It depends on Mg(2+) as a cofactor.

It is found in the cytoplasm. Its function is as follows. An essential GTPase which binds GTP, GDP and possibly (p)ppGpp with moderate affinity, with high nucleotide exchange rates and a fairly low GTP hydrolysis rate. Plays a role in control of the cell cycle, stress response, ribosome biogenesis and in those bacteria that undergo differentiation, in morphogenesis control. The chain is GTPase Obg from Prochlorococcus marinus (strain NATL2A).